A 737-amino-acid polypeptide reads, in one-letter code: 1,4-alpha-glucan branching enzyme GlgB (737 aa).

Asp-399 functions as the Nucleophile in the catalytic mechanism. Glu-452 (proton donor) is an active-site residue.

Belongs to the glycosyl hydrolase 13 family. GlgB subfamily. As to quaternary structure, monomer.

The catalysed reaction is Transfers a segment of a (1-&gt;4)-alpha-D-glucan chain to a primary hydroxy group in a similar glucan chain.. Its pathway is glycan biosynthesis; glycogen biosynthesis. Catalyzes the formation of the alpha-1,6-glucosidic linkages in glycogen by scission of a 1,4-alpha-linked oligosaccharide from growing alpha-1,4-glucan chains and the subsequent attachment of the oligosaccharide to the alpha-1,6 position. The sequence is that of 1,4-alpha-glucan branching enzyme GlgB from Chlamydia muridarum (strain MoPn / Nigg).